The sequence spans 149 residues: Protein E4.1 (149 aa).

In Snake adenovirus serotype 1 (SnAdV-1), this protein is Protein E4.1.